Consider the following 293-residue polypeptide: ATP phosphoribosyltransferase (293 aa).

This sequence belongs to the ATP phosphoribosyltransferase family. Long subfamily. It depends on Mg(2+) as a cofactor.

The protein localises to the cytoplasm. It catalyses the reaction 1-(5-phospho-beta-D-ribosyl)-ATP + diphosphate = 5-phospho-alpha-D-ribose 1-diphosphate + ATP. The protein operates within amino-acid biosynthesis; L-histidine biosynthesis; L-histidine from 5-phospho-alpha-D-ribose 1-diphosphate: step 1/9. Feedback inhibited by histidine. Its function is as follows. Catalyzes the condensation of ATP and 5-phosphoribose 1-diphosphate to form N'-(5'-phosphoribosyl)-ATP (PR-ATP). Has a crucial role in the pathway because the rate of histidine biosynthesis seems to be controlled primarily by regulation of HisG enzymatic activity. In Solidesulfovibrio magneticus (strain ATCC 700980 / DSM 13731 / RS-1) (Desulfovibrio magneticus), this protein is ATP phosphoribosyltransferase.